Reading from the N-terminus, the 1596-residue chain is A-kinase anchor protein SPHKAP (1596 aa).

5 disordered regions span residues 214–233 (KHGR…RSVS), 242–319 (ASEQ…TPKQ), 389–432 (DNSE…GHPA), 462–481 (SGEE…DQGE), and 760–809 (EQSD…SSSS). Over residues 292–306 (TLCTSSNSQKLSRTY) the composition is skewed to polar residues. The segment covering 462–479 (SGEEYECEDEEEESETDQ) has biased composition (acidic residues). The tract at residues 829-846 (FAEDLATTVVSMATELAA) is PKA-RII subunit binding domain. 3 disordered regions span residues 958 to 1022 (VVDT…ISKQ), 1282 to 1310 (VGER…ENSC), and 1328 to 1443 (VPLI…SSLG). Residues 959–971 (VDTSKSGQSSRSR) are compositionally biased toward polar residues. Basic and acidic residues predominate over residues 1333–1356 (IEPDQREEASEEKGGVETHHREAS). Residues 1357–1372 (HQTQQQSGKGSETATK) are compositionally biased toward polar residues. 2 stretches are compositionally biased toward low complexity: residues 1398 to 1409 (LSASSEESGSGS) and 1430 to 1443 (LSEG…SSLG).

This sequence belongs to the AKAP110 family.

It is found in the cytoplasm. In terms of biological role, anchoring protein that mediates the subcellular compartmentation of cAMP-dependent protein kinase (PKA type II). This Danio rerio (Zebrafish) protein is A-kinase anchor protein SPHKAP (sphkap).